A 33-amino-acid polypeptide reads, in one-letter code: Antimicrobial peptide MBP-1 (33 aa).

As to expression, predominantly in the embryo portion of the kernel.

The protein localises to the secreted. Functionally, inhibitor of both bacterial and fungal growth in vitro. This Zea mays (Maize) protein is Antimicrobial peptide MBP-1.